Reading from the N-terminus, the 704-residue chain is Meprin A subunit beta (704 aa).

The signal sequence occupies residues 1-20; the sequence is MDARHQPWFLVFATFLLVSG. Positions 21–64 are excised as a propeptide; the sequence is LPAPEKFVKDIDGGIDQDIFDINQGLGLDLFEGDIKLEANGKNS. Residues 21–654 lie on the Extracellular side of the membrane; that stretch reads LPAPEKFVKD…RCEKRGSTRD (634 aa). One can recognise a Peptidase M12A domain in the interval 63–257; that stretch reads NSIIGDHKRW…LKLNQLYNCT (195 aa). 3 disulfides stabilise this stretch: Cys-104–Cys-256, Cys-125–Cys-145, and Cys-266–Cys-428. His-153 contributes to the Zn(2+) binding site. Glu-154 is a catalytic residue. Residues His-157 and His-163 each coordinate Zn(2+). N-linked (GlcNAc...) asparagine glycans are attached at residues Asn-193, Asn-219, Asn-255, Asn-316, Asn-422, Asn-437, Asn-529, Asn-548, and Asn-593. One can recognise an MAM domain in the interval 261 to 430; sequence SFMDSCDFEL…INLSETRCPH (170 aa). The 156-residue stretch at 431–586 folds into the MATH domain; that stretch reads HIWHIQNFTQ…GDDIYILLTV (156 aa). The 41-residue stretch at 607-647 folds into the EGF-like domain; the sequence is VHNACSEVVCQNGGICVVQDGRAECKCPAGEDWWYMGKRCE. 3 disulfides stabilise this stretch: Cys-611–Cys-622, Cys-616–Cys-631, and Cys-633–Cys-646. A helical membrane pass occupies residues 655–678; sequence TVIIAVSSTVTVFAVMLIITLVSV. Residues 679–704 lie on the Cytoplasmic side of the membrane; it reads YCTRRKYRKKARANTAAMTLENQHAF. Thr-697 bears the Phosphothreonine mark.

Homotetramer consisting of disulfide-linked beta subunits, or heterotetramer of two alpha and two beta subunits formed by non-covalent association of two disulfide-linked heterodimers. Interacts with MBL2 through its carbohydrate moiety. This interaction may inhibit its catalytic activity. Interacts with TSPAN8. Zn(2+) is required as a cofactor. In terms of processing, proteolytically activated by trypsin in the intestinal lumen and kallikrein-related peptidases in other tissues. Post-translationally, N-glycosylated; contains high mannose and/or complex biantennary structures. Phosphorylated by PKC at multiple sites of its cytoplasmic part. Phosphorylation dcreases activity at the cell surface, leading to diminished substrate cleavage. As to expression, isoform 1 is expressed in kidney, intestinal brush borders, and salivary ducts. Isoform 2 has been found in carcinoma cells.

The protein resides in the cell membrane. The protein localises to the secreted. It carries out the reaction Hydrolysis of proteins, including azocasein, and peptides. Hydrolysis of 5-His-|-Leu-6, 6-Leu-|-Cys-7, 14-Ala-|-Leu-15 and 19-Cys-|-Gly-20 bonds in insulin B chain.. Its activity is regulated as follows. Strongly inhibited by fetuin-A/AHSG. Inhibited by cysteine and by the metal ion chelators EDTA and 1,10-phenanthroline. Not inhibited by 3,4-dichloroisocourmarin, soybean trypsin inhibitor, or the cysteine proteinase inhibitors iodoacetic acid and E-64. Functionally, membrane metallopeptidase that sheds many membrane-bound proteins. Exhibits a strong preference for acidic amino acids at the P1' position. Known substrates include: FGF19, VGFA, IL1B, IL18, procollagen I and III, E-cadherin, KLK7, gastrin, ADAM10, tenascin-C. The presence of several pro-inflammatory cytokine among substrates implicate MEP1B in inflammation. It is also involved in tissue remodeling due to its capability to degrade extracellular matrix components. The sequence is that of Meprin A subunit beta (Mep1b) from Mus musculus (Mouse).